Reading from the N-terminus, the 253-residue chain is U1 small nuclear ribonucleoprotein A (253 aa).

Residues 23–102 (VTIYINNLNE…KPMRIQYAKT (80 aa)) enclose the RRM 1 domain. The segment at 111–140 (DGTFVPRERRKRNDEKPEKKQKREQHHDVS) is disordered. One can recognise an RRM 2 domain in the interval 179–253 (NILFVQNLPH…NQMLISYAKK (75 aa)).

It belongs to the RRM U1 A/B'' family. Component of the spliceosome where it is associated with snRNP U1.

Its subcellular location is the nucleus. It is found in the nucleolus. Its function is as follows. Involved in nuclear pre-mRNA splicing. The chain is U1 small nuclear ribonucleoprotein A from Oryza sativa subsp. indica (Rice).